Consider the following 147-residue polypeptide: Hemoglobin subunit beta (147 aa).

Position 2 is an N-acetylserine (Ser2). Residues 3 to 147 (FLSAEEKNLV…VASALAHRYH (145 aa)) enclose the Globin domain. A Phosphoserine modification is found at Ser45. N6-acetyllysine is present on Lys60. His64 provides a ligand contact to heme b. An N6-acetyllysine modification is found at Lys83. His93 contacts heme b. The residue at position 94 (Cys94) is an S-nitrosocysteine.

The protein belongs to the globin family. As to quaternary structure, heterotetramer of two alpha chains and two beta chains. In terms of tissue distribution, red blood cells.

Its function is as follows. Involved in oxygen transport from the lung to the various peripheral tissues. This Panthera pardus orientalis (Amur leopard) protein is Hemoglobin subunit beta (HBB).